Reading from the N-terminus, the 97-residue chain is MGPQHLLALVVVSILVAAGNAYYEIDDDSVTRALRPSVIADQEHAVHAIPATNFISKDEDHSKNEKKEIEIIRIAIFSLLVVGVFAIMALRCLPFCL.

A signal peptide spans 1–21; that stretch reads MGPQHLLALVVVSILVAAGNA. Positions 32–60 match the RxLR-dEER motif; that stretch reads RALRPSVIADQEHAVHAIPATNFISKDED. Residues 69 to 89 traverse the membrane as a helical segment; the sequence is IEIIRIAIFSLLVVGVFAIMA.

Belongs to the RxLR effector family. Interacts with host transcription factor NAC069.

The protein localises to the secreted. It localises to the host endoplasmic reticulum membrane. Secreted effector that inhibits stress-induced relocalization of the transcription factor NAC069 to the nucleus, thus affecting its broad role in abiotic and biotic stress responses. The sequence is that of Secreted RxLR effector protein BLR05 from Bremia lactucae (Lettuce downy mildew).